Here is a 445-residue protein sequence, read N- to C-terminus: MREIVHLQTGQCGNQIGAKFWEVVSDEHGIERDGLYKGNNDLQLERISVYYNEIGASKYVPRAVLVDLEPGTMDSVRSGPLGSLFRPDNFVFGQSGAGNNWAKGHYTEGAELVDSVLDVVRKEAEGCDCLQGFQITHSLGGGTGAGMGTLLISKIREEYPDRMMCTYSVVPSPKVSDTVVEPYNATLSVHQLVENSDETFCIDNEALYDICFRTLKLSTPTYGDLNHLVSIVMSGITTCLRFPGQLNSDLRKLAVNMVPFPRLHFFMTGFAPLTARGSAQYRAVTVPELTQQMFDAKNMMAASDPRHGRYLTVAAVFRGKVSMKEVEEQMQNVQNKNSAYFVEWIPNNVLTAQCDIPPRGLKMAVTFLGNSTAIQELFKRVSDQFTAMFKRKAFLHWYTQEGMDEMEFTEAESNMQDLVAEYQQYQDATVEEEGEYEDEVLEDEQ.

Gln11, Glu69, Ser138, Gly142, Thr143, Gly144, Asn204, and Asn226 together coordinate GTP. A Mg(2+)-binding site is contributed by Glu69.

This sequence belongs to the tubulin family. Dimer of alpha and beta chains. A typical microtubule is a hollow water-filled tube with an outer diameter of 25 nm and an inner diameter of 15 nM. Alpha-beta heterodimers associate head-to-tail to form protofilaments running lengthwise along the microtubule wall with the beta-tubulin subunit facing the microtubule plus end conferring a structural polarity. Microtubules usually have 13 protofilaments but different protofilament numbers can be found in some organisms and specialized cells. Mg(2+) is required as a cofactor.

The protein localises to the cytoplasm. The protein resides in the cytoskeleton. Tubulin is the major constituent of microtubules, a cylinder consisting of laterally associated linear protofilaments composed of alpha- and beta-tubulin heterodimers. Microtubules grow by the addition of GTP-tubulin dimers to the microtubule end, where a stabilizing cap forms. Below the cap, tubulin dimers are in GDP-bound state, owing to GTPase activity of alpha-tubulin. The chain is Tubulin beta chain from Coprinopsis cinerea (strain Okayama-7 / 130 / ATCC MYA-4618 / FGSC 9003) (Inky cap fungus).